The sequence spans 320 residues: Citrate synthase (320 aa).

Catalysis depends on residues histidine 249 and aspartate 307.

It belongs to the citrate synthase family.

It catalyses the reaction oxaloacetate + acetyl-CoA + H2O = citrate + CoA + H(+). It functions in the pathway carbohydrate metabolism; tricarboxylic acid cycle; isocitrate from oxaloacetate: step 1/2. This chain is Citrate synthase (gltA), found in Bartonella doshiae.